The following is a 246-amino-acid chain: uncharacterized protein (246 aa).

Val-10–Val-34 provides a ligand contact to NADP(+). Substrate is bound at residue Ser-140. The Proton acceptor role is filled by Tyr-153.

It belongs to the short-chain dehydrogenases/reductases (SDR) family.

This is an uncharacterized protein from Staphylococcus saprophyticus subsp. saprophyticus (strain ATCC 15305 / DSM 20229 / NCIMB 8711 / NCTC 7292 / S-41).